We begin with the raw amino-acid sequence, 438 residues long: LIM domain-containing protein C4F6.12 (438 aa).

Disordered stretches follow at residues 1 to 37 and 49 to 78; these read MHSP…NNLV and TGGR…TIKQ. Residues 24–37 are compositionally biased toward polar residues; that stretch reads SPVSTNGSPLNNLV. 2 positions are modified to phosphoserine: Ser67 and Ser96. LIM zinc-binding domains lie at 256-316, 318-375, and 376-435; these read KSCH…QFSP, CKHC…NKYA, and VKCK…SVKF.

The chain is LIM domain-containing protein C4F6.12 from Schizosaccharomyces pombe (strain 972 / ATCC 24843) (Fission yeast).